The sequence spans 742 residues: Glucosylceramidase (742 aa).

N-linked (GlcNAc...) asparagine glycosylation is found at Asn37 and Asn160. Glu258 (proton donor) is an active-site residue. Residue Asn388 is glycosylated (N-linked (GlcNAc...) asparagine). Residue Glu492 is the Nucleophile of the active site. Residues Asn552, Asn560, and Asn698 are each glycosylated (N-linked (GlcNAc...) asparagine). A helical membrane pass occupies residues 701–721 (IAQILVAVVILLLGVLVAYYA).

This sequence belongs to the glycosyl hydrolase 5 (cellulase A) family.

The protein localises to the membrane. It catalyses the reaction a beta-D-glucosyl-(1&lt;-&gt;1')-N-acylsphing-4-enine + H2O = an N-acylsphing-4-enine + D-glucose. Specifically hydrolyzes the glucosidic linkage in glucosylceramide. May prevent accumulation of aberrent glucosylceramide containing immature ceramide. The sequence is that of Glucosylceramidase from Cryptococcus neoformans var. grubii serotype A (strain H99 / ATCC 208821 / CBS 10515 / FGSC 9487) (Filobasidiella neoformans var. grubii).